The following is a 1319-amino-acid chain: Uromodulin-like 1 (1319 aa).

The signal sequence occupies residues 1 to 22 (MMSRTVRLVLLALACTVDLSQA). The Extracellular segment spans residues 23-1273 (SGFTENGLSL…CTKPVLGTGY (1251 aa)). Residues 34-107 (SYQLCSYPVT…FEQLGLYCVL (74 aa)) form the EMI domain. 3 disulfides stabilise this stretch: C38–C95, C62–C71, and C94–C105. N-linked (GlcNAc...) asparagine glycosylation is present at N90. N-linked (GlcNAc...) asparagine glycosylation is present at N110. The WAP domain maps to 115 to 159 (FASRPGVCPTAEAEPLSPSCSLDTDCSGLQKCCSWPGGRHCVSPT). Residues N172, N193, and N243 are each glycosylated (N-linked (GlcNAc...) asparagine). An EGF-like 1; calcium-binding domain is found at 265 to 306 (DVNECLHSELQACSVREQCRNLEGSYQCVSSQRLNHTDEDCP). Disulfide bonds link C269/C283 and C277/C292. Residues 307–391 (PIRDFVALNV…ATLVVKTDAQ (85 aa)) enclose the Fibronectin type-III 1 domain. N-linked (GlcNAc...) asparagine glycosylation occurs at N315. An SEA 1 domain is found at 389-503 (DAQVFQVTIR…QRTFVQDWDE (115 aa)). In terms of domain architecture, EGF-like 2; calcium-binding spans 500–545 (DWDECAHSSEHDCHPSARCINLEGSYTCQCLTARDASPSRAGRVCE). Intrachain disulfides connect C504–C518, C512–C527, and C529–C544. Disordered stretches follow at residues 569–649 (TGIT…ITKD) and 664–703 (HSSP…PESP). Residues 619 to 632 (TGQGQTHGTHQGTT) are compositionally biased toward low complexity. A compositionally biased stretch (basic and acidic residues) spans 638–647 (TTRESQELIT). Positions 664–678 (HSSPTWKTPPNSTRL) are enriched in polar residues. The Fibronectin type-III 2 domain occupies 709–795 (PIGKVTVSNV…QLKVRTVAQK (87 aa)). N-linked (GlcNAc...) asparagine glycosylation is found at N717 and N757. Residues 792–904 (VAQKLAGNVR…GKTFMQDYNE (113 aa)) enclose the SEA 2 domain. Residues 901 to 945 (DYNECDMKEDDCAPGTCRNTFGSFTCSCDEGGPDSQVEYSGRSCD) form the EGF-like 3; calcium-binding domain. Intrachain disulfides connect C905-C917, C912-C926, and C928-C944. Positions 939–966 (YSGRSCDGDPSGNMTQTPGSEWSPTPAG) are disordered. Residues 950 to 961 (GNMTQTPGSEWS) are compositionally biased toward polar residues. N951 carries an N-linked (GlcNAc...) asparagine glycan. The region spanning 995-1238 (SCEIETVIIT…NSCRISCNDF (244 aa)) is the ZP domain. An intrachain disulfide couples C1160 to C1218. A helical membrane pass occupies residues 1274-1294 (IILLAAAALLVVAGATTLLIL). The Cytoplasmic portion of the chain corresponds to 1295–1319 (RYQRVRQKYNLRIQTDDFSYQVFSQ).

It localises to the cell membrane. This Mus musculus (Mouse) protein is Uromodulin-like 1 (Umodl1).